Consider the following 359-residue polypeptide: Guanine nucleotide-binding protein subunit alpha-11 (359 aa).

S-palmitoyl cysteine attachment occurs at residues Cys9 and Cys10. In terms of domain architecture, G-alpha spans 38–359 (RELKLLLLGT…QLNLKEYNLV (322 aa)). The G1 motif stretch occupies residues 41 to 54 (KLLLLGTGESGKST). GTP-binding positions include 46–53 (GTGESGKS) and 180–183 (LRVR). Ser53 is a binding site for Mg(2+). The tract at residues 178–186 (DVLRVRVPT) is G2 motif. Thr186 lines the Mg(2+) pocket. The G3 motif stretch occupies residues 201-210 (FRMVDVGGQR). The G4 motif stretch occupies residues 270 to 277 (ILFLNKKD). GTP is bound by residues 274–277 (NKKD) and Ala331. The interval 329–334 (TCATDT) is G5 motif.

It belongs to the G-alpha family. G(q) subfamily. In terms of assembly, g proteins are composed of 3 units; alpha, beta and gamma. The alpha chain contains the guanine nucleotide binding site. Interacts with RGS22. Interacts with NTSR1.

The protein localises to the cell membrane. The protein resides in the cytoplasm. It catalyses the reaction GTP + H2O = GDP + phosphate + H(+). In terms of biological role, guanine nucleotide-binding proteins (G proteins) function as transducers downstream of G protein-coupled receptors (GPCRs) in numerous signaling cascades. The alpha chain contains the guanine nucleotide binding site and alternates between an active, GTP-bound state and an inactive, GDP-bound state. Signaling by an activated GPCR promotes GDP release and GTP binding. The alpha subunit has a low GTPase activity that converts bound GTP to GDP, thereby terminating the signal. Both GDP release and GTP hydrolysis are modulated by numerous regulatory proteins. Signaling is mediated via phospholipase C-beta-dependent inositol lipid hydrolysis for signal propagation: activates phospholipase C-beta: following GPCR activation, GNA11 activates PLC-beta (PLCB1, PLCB2, PLCB3 or PLCB4), leading to production of diacylglycerol (DAG) and inositol 1,4,5-trisphosphate (IP3). Transduces FFAR4 signaling in response to long-chain fatty acids (LCFAs). Together with GNAQ, required for heart development. In the respiratory epithelium, transmits OXGR1-dependent signals that lead to downstream intracellular Ca(2+) release and mucocilliary clearance of airborne pathogens. The polypeptide is Guanine nucleotide-binding protein subunit alpha-11 (Gna11) (Rattus norvegicus (Rat)).